The chain runs to 400 residues: Argininosuccinate synthase (400 aa).

8–16 (AYSGGLDTS) contacts ATP. Tyrosine 87 is an L-citrulline binding site. Residue glycine 117 coordinates ATP. Residues threonine 119, asparagine 123, and aspartate 124 each contribute to the L-aspartate site. Asparagine 123 lines the L-citrulline pocket. Residues arginine 127, serine 175, glutamate 260, and tyrosine 272 each contribute to the L-citrulline site.

It belongs to the argininosuccinate synthase family. Type 1 subfamily. Homotetramer.

The protein localises to the cytoplasm. The catalysed reaction is L-citrulline + L-aspartate + ATP = 2-(N(omega)-L-arginino)succinate + AMP + diphosphate + H(+). Its pathway is amino-acid biosynthesis; L-arginine biosynthesis; L-arginine from L-ornithine and carbamoyl phosphate: step 2/3. The protein is Argininosuccinate synthase of Mycolicibacterium gilvum (strain PYR-GCK) (Mycobacterium gilvum (strain PYR-GCK)).